The following is a 208-amino-acid chain: Somatotropin-B (208 aa).

A signal peptide spans Met1 to Gly25. His44 contributes to the Zn(2+) binding site. The cysteines at positions 77 and 181 are disulfide-linked. Glu190 provides a ligand contact to Zn(2+). Cysteines 198 and 206 form a disulfide.

It belongs to the somatotropin/prolactin family.

It localises to the secreted. Growth hormone plays an important role in growth control. This chain is Somatotropin-B (gh-b), found in Xenopus laevis (African clawed frog).